The primary structure comprises 312 residues: Pantothenate kinase (312 aa).

Gly-97–Ser-104 contacts ATP.

This sequence belongs to the prokaryotic pantothenate kinase family.

The protein resides in the cytoplasm. It catalyses the reaction (R)-pantothenate + ATP = (R)-4'-phosphopantothenate + ADP + H(+). The protein operates within cofactor biosynthesis; coenzyme A biosynthesis; CoA from (R)-pantothenate: step 1/5. The chain is Pantothenate kinase from Mycobacterium sp. (strain JLS).